Here is a 121-residue protein sequence, read N- to C-terminus: Basic phospholipase A2 VRV-PL-V (121 aa).

7 disulfides stabilise this stretch: Cys-26–Cys-115, Cys-28–Cys-44, Cys-43–Cys-95, Cys-49–Cys-121, Cys-50–Cys-88, Cys-57–Cys-81, and Cys-75–Cys-86. Residues Tyr-27, Gly-29, and Gly-31 each coordinate Ca(2+). The active site involves His-47. Asp-48 is a binding site for Ca(2+). The active site involves Asp-89.

This sequence belongs to the phospholipase A2 family. Group II subfamily. D49 sub-subfamily. As to quaternary structure, monomer. It depends on Ca(2+) as a cofactor. Expressed by the venom gland.

Its subcellular location is the secreted. It catalyses the reaction a 1,2-diacyl-sn-glycero-3-phosphocholine + H2O = a 1-acyl-sn-glycero-3-phosphocholine + a fatty acid + H(+). Functionally, snake venom phospholipase A2 (PLA2) that has a low enzymatic activity. PLA2 catalyzes the calcium-dependent hydrolysis of the 2-acyl groups in 3-sn-phosphoglycerides. The sequence is that of Basic phospholipase A2 VRV-PL-V from Daboia russelii (Russel's viper).